The primary structure comprises 101 residues: Small ribosomal subunit protein bS6 (101 aa).

This sequence belongs to the bacterial ribosomal protein bS6 family.

Functionally, binds together with bS18 to 16S ribosomal RNA. The chain is Small ribosomal subunit protein bS6 from Oleidesulfovibrio alaskensis (strain ATCC BAA-1058 / DSM 17464 / G20) (Desulfovibrio alaskensis).